A 605-amino-acid polypeptide reads, in one-letter code: Elongation factor 4 (605 aa).

The region spanning 10–192 (KNIRNFAIVA…AIVMRLPPPH (183 aa)) is the tr-type G domain. GTP-binding positions include 22–27 (DHGKST) and 139–142 (NKVD).

Belongs to the TRAFAC class translation factor GTPase superfamily. Classic translation factor GTPase family. LepA subfamily.

The protein localises to the cell inner membrane. It catalyses the reaction GTP + H2O = GDP + phosphate + H(+). In terms of biological role, required for accurate and efficient protein synthesis under certain stress conditions. May act as a fidelity factor of the translation reaction, by catalyzing a one-codon backward translocation of tRNAs on improperly translocated ribosomes. Back-translocation proceeds from a post-translocation (POST) complex to a pre-translocation (PRE) complex, thus giving elongation factor G a second chance to translocate the tRNAs correctly. Binds to ribosomes in a GTP-dependent manner. The chain is Elongation factor 4 from Chelativorans sp. (strain BNC1).